A 1754-amino-acid chain; its full sequence is Intraflagellar transport protein 172 homolog (1754 aa).

7 WD repeats span residues 14-53 (EQIQ…RDKF), 64-103 (KNSY…NDKK), 110-149 (PQAS…QSLY), 151-190 (GDSI…EPLG), 194-232 (QHPV…RTFD), 283-322 (ACLY…TVWQ), and 519-557 (TLLS…EHVT). TPR repeat units lie at residues 623–656 (KAMW…SKAY), 690–723 (GSDL…DEAV), 748–781 (SEQQ…ARAA), 807–840 (SELY…ARAL), 852–885 (TALE…QKAL), 1041–1074 (RGKL…EDGY), 1140–1166 (DEVH…FLKA), 1167–1199 (NKPR…AVGE), 1211–1250 (TSNY…AEEH), 1282–1315 (SRSY…NAED), and 1698–1733 (FPVR…SPGS).

It belongs to the IFT172 family.

The protein resides in the cell projection. Its subcellular location is the cilium. Its function is as follows. Required for the maintenance and formation of cilia. The polypeptide is Intraflagellar transport protein 172 homolog (Drosophila melanogaster (Fruit fly)).